A 481-amino-acid polypeptide reads, in one-letter code: 2-succinylbenzoate--CoA ligase (481 aa).

The protein belongs to the ATP-dependent AMP-binding enzyme family. MenE subfamily.

It catalyses the reaction 2-succinylbenzoate + ATP + CoA = 2-succinylbenzoyl-CoA + AMP + diphosphate. It functions in the pathway quinol/quinone metabolism; 1,4-dihydroxy-2-naphthoate biosynthesis; 1,4-dihydroxy-2-naphthoate from chorismate: step 5/7. It participates in quinol/quinone metabolism; menaquinone biosynthesis. Functionally, converts 2-succinylbenzoate (OSB) to 2-succinylbenzoyl-CoA (OSB-CoA). The chain is 2-succinylbenzoate--CoA ligase from Bacillus mycoides (strain KBAB4) (Bacillus weihenstephanensis).